The sequence spans 153 residues: Transcriptional repressor NrdR (153 aa).

A zinc finger spans residues 3-34; it reads CPFCAHDDSQVKDSRPAEDNAAIRRRRQCSKC. Positions 49-139 constitute an ATP-cone domain; sequence VTVVKSDDKR…VYRDFSEARD (91 aa).

It belongs to the NrdR family. Zn(2+) serves as cofactor.

Its function is as follows. Negatively regulates transcription of bacterial ribonucleotide reductase nrd genes and operons by binding to NrdR-boxes. The sequence is that of Transcriptional repressor NrdR from Erythrobacter litoralis (strain HTCC2594).